The chain runs to 598 residues: UvrABC system protein C (598 aa).

The region spanning 14–91 (DQPGCYLMKD…IHKNNPKYNI (78 aa)) is the GIY-YIG domain. The UVR domain maps to 196–231 (TEIQDRLQEKMAYAAAHMEFEKAAEFRDQIKAIETV).

The protein belongs to the UvrC family. As to quaternary structure, interacts with UvrB in an incision complex.

The protein localises to the cytoplasm. Its function is as follows. The UvrABC repair system catalyzes the recognition and processing of DNA lesions. UvrC both incises the 5' and 3' sides of the lesion. The N-terminal half is responsible for the 3' incision and the C-terminal half is responsible for the 5' incision. In Enterococcus faecalis (strain ATCC 700802 / V583), this protein is UvrABC system protein C.